Reading from the N-terminus, the 306-residue chain is Homoserine O-acetyltransferase (306 aa).

Cys142 functions as the Acyl-thioester intermediate in the catalytic mechanism. The substrate site is built by Lys163 and Ser192. His235 (proton acceptor) is an active-site residue. Glu237 is a catalytic residue. Arg249 serves as a coordination point for substrate.

The protein belongs to the MetA family.

The protein resides in the cytoplasm. The enzyme catalyses L-homoserine + acetyl-CoA = O-acetyl-L-homoserine + CoA. Its pathway is amino-acid biosynthesis; L-methionine biosynthesis via de novo pathway; O-acetyl-L-homoserine from L-homoserine: step 1/1. In terms of biological role, transfers an acetyl group from acetyl-CoA to L-homoserine, forming acetyl-L-homoserine. This chain is Homoserine O-acetyltransferase, found in Clostridium botulinum (strain Alaska E43 / Type E3).